The primary structure comprises 297 residues: Ribosomal RNA small subunit methyltransferase H (297 aa).

S-adenosyl-L-methionine is bound by residues 37–39 (GGH), E56, F87, D102, and H109.

Belongs to the methyltransferase superfamily. RsmH family.

Its subcellular location is the cytoplasm. It catalyses the reaction cytidine(1402) in 16S rRNA + S-adenosyl-L-methionine = N(4)-methylcytidine(1402) in 16S rRNA + S-adenosyl-L-homocysteine + H(+). Functionally, specifically methylates the N4 position of cytidine in position 1402 (C1402) of 16S rRNA. In Borrelia duttonii (strain Ly), this protein is Ribosomal RNA small subunit methyltransferase H.